We begin with the raw amino-acid sequence, 329 residues long: Biotin synthase (329 aa).

The 231-residue stretch at 48-278 folds into the Radical SAM core domain; sequence FVGDKVYLCS…SKKISVCGGR (231 aa). Cysteine 66, cysteine 70, and cysteine 73 together coordinate [4Fe-4S] cluster. Serine 143 and cysteine 203 together coordinate [2Fe-2S] cluster.

Belongs to the radical SAM superfamily. Biotin synthase family. Homodimer. [4Fe-4S] cluster serves as cofactor. Requires [2Fe-2S] cluster as cofactor.

It carries out the reaction (4R,5S)-dethiobiotin + (sulfur carrier)-SH + 2 reduced [2Fe-2S]-[ferredoxin] + 2 S-adenosyl-L-methionine = (sulfur carrier)-H + biotin + 2 5'-deoxyadenosine + 2 L-methionine + 2 oxidized [2Fe-2S]-[ferredoxin]. It participates in cofactor biosynthesis; biotin biosynthesis; biotin from 7,8-diaminononanoate: step 2/2. Its function is as follows. Catalyzes the conversion of dethiobiotin (DTB) to biotin by the insertion of a sulfur atom into dethiobiotin via a radical-based mechanism. The protein is Biotin synthase of Geotalea uraniireducens (strain Rf4) (Geobacter uraniireducens).